A 348-amino-acid polypeptide reads, in one-letter code: Nicotinate-nucleotide--dimethylbenzimidazole phosphoribosyltransferase (348 aa).

Glu-316 (proton acceptor) is an active-site residue.

Belongs to the CobT family.

It carries out the reaction 5,6-dimethylbenzimidazole + nicotinate beta-D-ribonucleotide = alpha-ribazole 5'-phosphate + nicotinate + H(+). It participates in nucleoside biosynthesis; alpha-ribazole biosynthesis; alpha-ribazole from 5,6-dimethylbenzimidazole: step 1/2. Functionally, catalyzes the synthesis of alpha-ribazole-5'-phosphate from nicotinate mononucleotide (NAMN) and 5,6-dimethylbenzimidazole (DMB). The sequence is that of Nicotinate-nucleotide--dimethylbenzimidazole phosphoribosyltransferase from Xanthomonas euvesicatoria pv. vesicatoria (strain 85-10) (Xanthomonas campestris pv. vesicatoria).